The sequence spans 180 residues: Probable macrolide acetyltransferase (180 aa).

This sequence belongs to the transferase hexapeptide repeat family.

The polypeptide is Probable macrolide acetyltransferase (Lysinibacillus sphaericus (Bacillus sphaericus)).